We begin with the raw amino-acid sequence, 96 residues long: Aspartyl/glutamyl-tRNA(Asn/Gln) amidotransferase subunit C (96 aa).

The protein belongs to the GatC family. As to quaternary structure, heterotrimer of A, B and C subunits.

The catalysed reaction is L-glutamyl-tRNA(Gln) + L-glutamine + ATP + H2O = L-glutaminyl-tRNA(Gln) + L-glutamate + ADP + phosphate + H(+). It catalyses the reaction L-aspartyl-tRNA(Asn) + L-glutamine + ATP + H2O = L-asparaginyl-tRNA(Asn) + L-glutamate + ADP + phosphate + 2 H(+). Functionally, allows the formation of correctly charged Asn-tRNA(Asn) or Gln-tRNA(Gln) through the transamidation of misacylated Asp-tRNA(Asn) or Glu-tRNA(Gln) in organisms which lack either or both of asparaginyl-tRNA or glutaminyl-tRNA synthetases. The reaction takes place in the presence of glutamine and ATP through an activated phospho-Asp-tRNA(Asn) or phospho-Glu-tRNA(Gln). The chain is Aspartyl/glutamyl-tRNA(Asn/Gln) amidotransferase subunit C from Leptospira interrogans serogroup Icterohaemorrhagiae serovar copenhageni (strain Fiocruz L1-130).